We begin with the raw amino-acid sequence, 767 residues long: DNA topoisomerase 1 (767 aa).

Basic and acidic residues predominate over residues 1 to 23 (MSGDHLHNDSQIEADFRLNDSHK). Positions 1-201 (MSGDHLHNDS…NKKKKPKKEE (201 aa)) are disordered. S2 carries the post-translational modification N-acetylserine. Phosphoserine is present on residues S2 and S10. Positions 24-39 (HKDKHKDREHRHKEHK) are enriched in basic residues. Basic and acidic residues predominate over residues 40–110 (KDKEKDREKS…DAKIKKEKEN (71 aa)). S59 bears the Phosphoserine mark. K103 is covalently cross-linked (Glycyl lysine isopeptide (Lys-Gly) (interchain with G-Cter in SUMO2)). K105 participates in a covalent cross-link: Glycyl lysine isopeptide (Lys-Gly) (interchain with G-Cter in SUMO); alternate. K105 is covalently cross-linked (Glycyl lysine isopeptide (Lys-Gly) (interchain with G-Cter in SUMO2); alternate). S114 carries the post-translational modification Phosphoserine. K119 participates in a covalent cross-link: Glycyl lysine isopeptide (Lys-Gly) (interchain with G-Cter in SUMO); alternate. A Glycyl lysine isopeptide (Lys-Gly) (interchain with G-Cter in SUMO2); alternate cross-link involves residue K119. K119 is covalently cross-linked (Glycyl lysine isopeptide (Lys-Gly) (interchain with G-Cter in SUMO1); alternate). The span at 131 to 168 (PKEDIKPLKRPRDEDDADYKPKKIKTEDIKKEKKRKLE) shows a compositional bias: basic and acidic residues. Glycyl lysine isopeptide (Lys-Gly) (interchain with G-Cter in SUMO2) cross-links involve residues K136 and K150. K155 participates in a covalent cross-link: Glycyl lysine isopeptide (Lys-Gly) (interchain with G-Cter in SUMO); alternate. K155 participates in a covalent cross-link: Glycyl lysine isopeptide (Lys-Gly) (interchain with G-Cter in SUMO2); alternate. Residues K160 and K166 each participate in a glycyl lysine isopeptide (Lys-Gly) (interchain with G-Cter in SUMO2) cross-link. A Glycyl lysine isopeptide (Lys-Gly) (interchain with G-Cter in SUMO2); alternate cross-link involves residue K174. K174 bears the N6-acetyllysine; alternate mark. Residues 181–201 (KDKDKKGAESDNKKKKPKKEE) show a composition bias toward basic and acidic residues. K206 is covalently cross-linked (Glycyl lysine isopeptide (Lys-Gly) (interchain with G-Cter in SUMO2)). K282 carries the N6-acetyllysine modification. K338 is covalently cross-linked (Glycyl lysine isopeptide (Lys-Gly) (interchain with G-Cter in SUMO2)). Interaction with DNA regions lie at residues 427 to 428 (KY) and 490 to 495 (RAGNEK). Residues 434–767 (SSRIKGEKDW…IDMTDEDYEF (334 aa)) form the Topo IB-type catalytic domain. A Phosphoserine; by CK2 modification is found at S508. K551 is covalently cross-linked (Glycyl lysine isopeptide (Lys-Gly) (interchain with G-Cter in SUMO2)). The interaction with DNA stretch occupies residues 587–589 (TAK). Glycyl lysine isopeptide (Lys-Gly) (interchain with G-Cter in SUMO2) cross-links involve residues K644, K702, and K714. Y725 serves as the catalytic O-(3'-phospho-DNA)-tyrosine intermediate.

The protein belongs to the type IB topoisomerase family. Monomer. Interacts with ERCC6. Interacts with TPRN; TPRN interacts with a number of DNA damage response proteins, is recruited to sites of DNA damage and may play a role in DNA damage repair. In terms of processing, sumoylated. Lys-119 is the main site of sumoylation. Sumoylation plays a role in partitioning TOP1 between nucleoli and nucleoplasm. Levels are dramatically increased on camptothecin (CPT) treatment. Post-translationally, phosphorylation at Ser-508 by CK2 increases binding to supercoiled DNA and sensitivity to camptothecin.

It localises to the nucleus. It is found in the nucleolus. Its subcellular location is the nucleoplasm. It catalyses the reaction ATP-independent breakage of single-stranded DNA, followed by passage and rejoining.. With respect to regulation, specifically inhibited by camptothecin (CPT), a plant alkaloid with antitumor activity. Functionally, releases the supercoiling and torsional tension of DNA introduced during the DNA replication and transcription by transiently cleaving and rejoining one strand of the DNA duplex. Introduces a single-strand break via transesterification at a target site in duplex DNA. The scissile phosphodiester is attacked by the catalytic tyrosine of the enzyme, resulting in the formation of a DNA-(3'-phosphotyrosyl)-enzyme intermediate and the expulsion of a 5'-OH DNA strand. The free DNA strand then rotates around the intact phosphodiester bond on the opposing strand, thus removing DNA supercoils. Finally, in the religation step, the DNA 5'-OH attacks the covalent intermediate to expel the active-site tyrosine and restore the DNA phosphodiester backbone. Regulates the alternative splicing of tissue factor (F3) pre-mRNA in endothelial cells. Involved in the circadian transcription of the core circadian clock component BMAL1 by altering the chromatin structure around the ROR response elements (ROREs) on the BMAL1 promoter. This chain is DNA topoisomerase 1 (TOP1), found in Cricetulus griseus (Chinese hamster).